The primary structure comprises 314 residues: CD-NTase-associated protein 12 (314 aa).

The region spanning 5 to 129 (RIFIGSSSEE…VKGISLARFK (125 aa)) is the TIR domain. The interval 160–314 (SSTLAAVYYE…DLIKIVDEDN (155 aa)) is STING domain. Phenylalanine 171, proline 234, and aspartate 252 together coordinate 3',3'-c-di-GMP.

It in the C-terminal section; belongs to the bacterial STING family. Homodimer. Forms homodimers; in the presence of c-di-GMP forms filaments with an ordered array of parallel-stacked subunits.

The catalysed reaction is NAD(+) + H2O = ADP-D-ribose + nicotinamide + H(+). With respect to regulation, NAD(+) hydrolase activity is strongly stimulated by c-di-GMP, weakly by 3'3'-cGAMP, very weakly by c-di-AMP but not at all by 2'3'-cGAMP. Self-association of TIR domains is required for NADase activity. Functionally, effector protein of a CBASS antiviral system with NAD(+) hydrolase activity. CBASS (cyclic oligonucleotide-based antiphage signaling system) provides immunity against bacteriophage. The CD-NTase protein synthesizes cyclic nucleotides in response to infection; these serve as specific second messenger signals. The signals activate a diverse range of effectors, leading to bacterial cell death and thus abortive phage infection. A type I-(GG) CBASS system. Binds c-di-GMP (synthesized by the cognate CdnE encoded upstream in the same operon), and about 10-fold less well 3'3'-cGAMP, but not c-di-AMP, 2'-3'-cGAMP or cUMP-AMP (tested without the N-terminal TIR domain). Upon activation by c-di-GMP forms filaments which hydrolyze NAD(+); filament formation is required for enzyme activation. This is CD-NTase-associated protein 12 from Capnocytophaga granulosa (strain ATCC 51502 / DSM 11449 / JCM 8566 / LMG 16022 / NCTC 12948 / B0611).